The sequence spans 241 residues: RxLR effector protein SFI5 (241 aa).

The N-terminal stretch at 1–20 is a signal peptide; sequence MLRQARPLVVLIAVTFLVAS. The RxLR-dEER signature appears at 44 to 62; sequence RLLRTHHATIKVNADSEER.

Belongs to the RxLR effector family.

Its subcellular location is the secreted. It is found in the host cell membrane. Its function is as follows. Effector that suppresses flg22-induced post-translational MAP kinase activation in tomato but not in Arabidopsis. The perception of highly conserved pathogen- or microbe-associated molecular patterns (PAMPs/MAMPs), such as flg22, triggers converging signaling pathways recruiting MAP kinase cascades and inducing transcriptional re-programming, yielding a generic antimicrobial response. This is RxLR effector protein SFI5 from Phytophthora infestans (strain T30-4) (Potato late blight agent).